The following is a 591-amino-acid chain: DDB1- and CUL4-associated factor 8 (591 aa).

Residues 1–25 (MSNKRPNTTDGRTDLANGSLSSSPE) are compositionally biased toward polar residues. Positions 1–140 (MSNKRPNTTD…EDWVSSETTA (140 aa)) are disordered. Ser22 and Ser23 each carry phosphoserine. The Nuclear export signal motif lies at 40 to 51 (IEVEASDLSLSL). 2 stretches are compositionally biased toward basic and acidic residues: residues 66-100 (RGTD…HGHS) and 118-131 (SRDQ…RALE). 3 positions are modified to phosphoserine: Ser100, Ser123, and Ser124. WD repeat units follow at residues 185-224 (GHTG…PVLD), 228-269 (GHKS…CCKN), 275-315 (QHKG…PASK), 323-363 (EKKV…ENEN), 379-418 (ESKA…GAQY), 426-466 (RNNA…IIQF), and 470-509 (DKGG…STEL). Arg198 carries the post-translational modification Omega-N-methylarginine; by PRMT1. Residues 552–591 (HRRWREPGVGATDADSDESPSSSDTSDEEEGPDRVQCMPS) are disordered.

Belongs to the WD repeat DCAF8 family. In terms of assembly, interacts with DDB1, CUL4A and CUL4B. Interacts with KPNA1, KPNB1 and XPO1. As to expression, expressed in the brain.

The protein resides in the nucleus. The protein localises to the cytoplasm. It participates in protein modification; protein ubiquitination. In terms of biological role, may function as a substrate receptor for CUL4-DDB1 E3 ubiquitin-protein ligase complex. The polypeptide is DDB1- and CUL4-associated factor 8 (Dcaf8) (Mus musculus (Mouse)).